We begin with the raw amino-acid sequence, 91 residues long: Acylphosphatase (91 aa).

Residues 3-90 (RVSMIVSGQV…CGYSIFTIRR (88 aa)) enclose the Acylphosphatase-like domain. Active-site residues include R18 and N36.

The protein belongs to the acylphosphatase family.

It carries out the reaction an acyl phosphate + H2O = a carboxylate + phosphate + H(+). The sequence is that of Acylphosphatase (acyP) from Methanospirillum hungatei JF-1 (strain ATCC 27890 / DSM 864 / NBRC 100397 / JF-1).